A 157-amino-acid chain; its full sequence is Ribosome maturation factor RimP (157 aa).

It belongs to the RimP family.

It is found in the cytoplasm. Required for maturation of 30S ribosomal subunits. The sequence is that of Ribosome maturation factor RimP from Thermus thermophilus (strain ATCC BAA-163 / DSM 7039 / HB27).